Reading from the N-terminus, the 917-residue chain is Protein STE5 (917 aa).

Disordered stretches follow at residues 1-25 and 58-151; these read MMET…YSGT and FQRS…LSDN. Residues 16-25 are compositionally biased toward polar residues; it reads FGSSTQYSGT. Residues 69 to 84 are compositionally biased toward low complexity; the sequence is SPSPISSSTFSFSPKS. 2 stretches are compositionally biased toward polar residues: residues 85–110 and 118–138; these read RVTS…STDY and TSSL…NLSR. Position 329 is a phosphoserine (serine 329). Residues 778–794 are compositionally biased toward acidic residues; sequence HDDDDEEDNDDSTDNEL. Residues 778–821 are disordered; it reads HDDDDEEDNDDSTDNELDNSSGSLSDAESTTTIHIDSPFDNENA. Residues 799–821 show a composition bias toward polar residues; the sequence is GSLSDAESTTTIHIDSPFDNENA.

This sequence to yeast FAR1. May be regulated at the phosphorylation level, and by the mating type of the cell and depends on an intact pheromone-response pathway.

The protein localises to the cytoplasm. Component of the pheromone signal transduction pathway. It mediates pheromone signals acting between STE20 and STE11. It is absolutely required for pheromone-induced transcription of FUS1. May play a role in cell-cycle arrest in response to pheromone. The polypeptide is Protein STE5 (STE5) (Saccharomyces cerevisiae (strain ATCC 204508 / S288c) (Baker's yeast)).